We begin with the raw amino-acid sequence, 621 residues long: Interleukin-1 receptor-associated kinase-like 2 (621 aa).

In terms of domain architecture, Death spans 13 to 94; the sequence is LDDLCRNMDT…RAAQIILNWK (82 aa). The segment at 113-175 is disordered; that stretch reads GKPLAASVRN…TASADSKDFS (63 aa). Residues 157–169 are compositionally biased toward polar residues; sequence ASSSLKTNQTASA. The Protein kinase domain occupies 206 to 476; that stretch reads FNPSHKISEG…AEALVMAACL (271 aa). Residues 212–220, K233, and 333–336 each bind ATP; these read ISEGTFADV and KSSN. The span at 503–522 shows a compositional bias: polar residues; sequence ETSLPCSGLSEGTGSSFNTP. A disordered region spans residues 503–534; sequence ETSLPCSGLSEGTGSSFNTPEETDDVDNSSFD.

This sequence belongs to the protein kinase superfamily. TKL Ser/Thr protein kinase family. Pelle subfamily. Interacts with MYD88. IL-1 stimulation leads to the formation of a signaling complex which dissociates from the IL-1 receptor following the binding of PELI1.

Binds to the IL-1 type I receptor following IL-1 engagement, triggering intracellular signaling cascades leading to transcriptional up-regulation and mRNA stabilization. The sequence is that of Interleukin-1 receptor-associated kinase-like 2 (IRAK2) from Bos taurus (Bovine).